The chain runs to 363 residues: UDP-3-O-acylglucosamine N-acyltransferase (363 aa).

Catalysis depends on His-259, which acts as the Proton acceptor.

It belongs to the transferase hexapeptide repeat family. LpxD subfamily. Homotrimer.

It catalyses the reaction a UDP-3-O-[(3R)-3-hydroxyacyl]-alpha-D-glucosamine + a (3R)-hydroxyacyl-[ACP] = a UDP-2-N,3-O-bis[(3R)-3-hydroxyacyl]-alpha-D-glucosamine + holo-[ACP] + H(+). Its pathway is bacterial outer membrane biogenesis; LPS lipid A biosynthesis. Functionally, catalyzes the N-acylation of UDP-3-O-acylglucosamine using 3-hydroxyacyl-ACP as the acyl donor. Is involved in the biosynthesis of lipid A, a phosphorylated glycolipid that anchors the lipopolysaccharide to the outer membrane of the cell. The polypeptide is UDP-3-O-acylglucosamine N-acyltransferase (Ruegeria pomeroyi (strain ATCC 700808 / DSM 15171 / DSS-3) (Silicibacter pomeroyi)).